The following is a 378-amino-acid chain: UPF0754 membrane protein BALH_0780 (378 aa).

The next 2 membrane-spanning stretches (helical) occupy residues 1 to 21 (MNIW…GGFT) and 357 to 377 (YLGA…LLFL).

Belongs to the UPF0754 family.

Its subcellular location is the cell membrane. This Bacillus thuringiensis (strain Al Hakam) protein is UPF0754 membrane protein BALH_0780.